The primary structure comprises 472 residues: Aspartyl/glutamyl-tRNA(Asn/Gln) amidotransferase subunit B (472 aa).

It belongs to the GatB/GatE family. GatB subfamily. As to quaternary structure, heterotrimer of A, B and C subunits.

It carries out the reaction L-glutamyl-tRNA(Gln) + L-glutamine + ATP + H2O = L-glutaminyl-tRNA(Gln) + L-glutamate + ADP + phosphate + H(+). The enzyme catalyses L-aspartyl-tRNA(Asn) + L-glutamine + ATP + H2O = L-asparaginyl-tRNA(Asn) + L-glutamate + ADP + phosphate + 2 H(+). Functionally, allows the formation of correctly charged Asn-tRNA(Asn) or Gln-tRNA(Gln) through the transamidation of misacylated Asp-tRNA(Asn) or Glu-tRNA(Gln) in organisms which lack either or both of asparaginyl-tRNA or glutaminyl-tRNA synthetases. The reaction takes place in the presence of glutamine and ATP through an activated phospho-Asp-tRNA(Asn) or phospho-Glu-tRNA(Gln). The sequence is that of Aspartyl/glutamyl-tRNA(Asn/Gln) amidotransferase subunit B from Campylobacter jejuni subsp. jejuni serotype O:2 (strain ATCC 700819 / NCTC 11168).